The following is a 448-amino-acid chain: UDP-glucose 6-dehydrogenase (448 aa).

NAD(+)-binding positions include 2–19 (NITF…GIIM), V11, D30, K35, T121, and E152. Residues 148-152 (EFLRE), K204, N208, 249-253 (FLNAG), and G257 each bind substrate. C260 acts as the Nucleophile in catalysis. K263 provides a ligand contact to NAD(+). K321 is a substrate binding site. An NAD(+)-binding site is contributed by R328.

The protein belongs to the UDP-glucose/GDP-mannose dehydrogenase family.

It carries out the reaction UDP-alpha-D-glucose + 2 NAD(+) + H2O = UDP-alpha-D-glucuronate + 2 NADH + 3 H(+). It functions in the pathway nucleotide-sugar biosynthesis; UDP-alpha-D-glucuronate biosynthesis; UDP-alpha-D-glucuronate from UDP-alpha-D-glucose: step 1/1. In Rickettsia felis (strain ATCC VR-1525 / URRWXCal2) (Rickettsia azadi), this protein is UDP-glucose 6-dehydrogenase (udg).